A 237-amino-acid polypeptide reads, in one-letter code: Uridylate kinase (237 aa).

13-16 (KLSG) is an ATP binding site. Glycine 53 contributes to the UMP binding site. ATP-binding residues include glycine 54 and arginine 58. Residues aspartate 73 and 134–141 (AGLPYFST) contribute to the UMP site. ATP contacts are provided by asparagine 162, tyrosine 168, and aspartate 171.

The protein belongs to the UMP kinase family. Homohexamer.

The protein localises to the cytoplasm. It catalyses the reaction UMP + ATP = UDP + ADP. The protein operates within pyrimidine metabolism; CTP biosynthesis via de novo pathway; UDP from UMP (UMPK route): step 1/1. Its activity is regulated as follows. Inhibited by UTP. In terms of biological role, catalyzes the reversible phosphorylation of UMP to UDP. The polypeptide is Uridylate kinase (Leifsonia xyli subsp. xyli (strain CTCB07)).